Reading from the N-terminus, the 85-residue chain is Cell division protein ZapA (85 aa).

A coiled-coil region spans residues 60 to 85; sequence AVNVVHDYLKLKEQYEKLEIQLKEKE.

It belongs to the ZapA family. Type 2 subfamily. In terms of assembly, homodimer. Interacts with FtsZ.

It is found in the cytoplasm. Its function is as follows. Activator of cell division through the inhibition of FtsZ GTPase activity, therefore promoting FtsZ assembly into bundles of protofilaments necessary for the formation of the division Z ring. It is recruited early at mid-cell but it is not essential for cell division. This chain is Cell division protein ZapA, found in Bacillus pumilus (strain SAFR-032).